The primary structure comprises 926 residues: Storkhead-box protein 2 (926 aa).

Disordered stretches follow at residues 1–32 (MKKTRSTTLRRAWPSSDFSDRASDRMRSRSEK), 338–391 (EEEK…HLDI), 452–529 (EMPF…SYID), 564–588 (KEPSSACSLLEPGKPPESLPSYGEL), 632–672 (GVKK…GGVA), 724–803 (LKSH…GTMQ), and 825–926 (LAPK…VTSV). The segment covering 18-32 (FSDRASDRMRSRSEK) has biased composition (basic and acidic residues). Residues 353-378 (HSGRSKKSRTHRKSHGKSRSHSKTRV) show a composition bias toward basic residues. The span at 379 to 391 (SKGDPSDGSHLDI) shows a compositional bias: basic and acidic residues. Residues 463 to 472 (SHSKVHRSHS) are compositionally biased toward basic residues. Basic and acidic residues predominate over residues 473 to 495 (HTQDRRSRNERSNKAKERSRSMD). A compositionally biased stretch (polar residues) spans 518–529 (QDDQTPSQSYID). Residues 632 to 658 (GVKKLSPSDRQVPHSSREPVGHKEESP) are compositionally biased toward basic and acidic residues. Polar residues predominate over residues 746 to 769 (LGTSAAQAMPASQRQQESGGNQEA). Residues 785–799 (GANKNTEEEKNREDV) are compositionally biased toward basic and acidic residues. Polar residues-rich tracts occupy residues 847–884 (MDSSSITVDSGFNSPRTRESLASNTSSIVESNRRQNPA) and 914–926 (KPSNCLQASVTSV).

The polypeptide is Storkhead-box protein 2 (STOX2) (Homo sapiens (Human)).